Reading from the N-terminus, the 310-residue chain is Ribosomal RNA small subunit methyltransferase H (310 aa).

Residues 47–49 (GGH), Asp66, Phe93, Asp108, and Gln115 each bind S-adenosyl-L-methionine. Positions 275–310 (RKPFMASEQEQADNPRSRSAKLRIARRRPDTARSGP) are disordered. Over residues 301-310 (RRPDTARSGP) the composition is skewed to basic and acidic residues.

Belongs to the methyltransferase superfamily. RsmH family.

The protein localises to the cytoplasm. The enzyme catalyses cytidine(1402) in 16S rRNA + S-adenosyl-L-methionine = N(4)-methylcytidine(1402) in 16S rRNA + S-adenosyl-L-homocysteine + H(+). In terms of biological role, specifically methylates the N4 position of cytidine in position 1402 (C1402) of 16S rRNA. This is Ribosomal RNA small subunit methyltransferase H from Synechococcus sp. (strain CC9311).